Consider the following 195-residue polypeptide: SXP/RAL-2-like protein 2 (195 aa).

The segment at 162 to 195 is disordered; sequence EKVHGGSHGGLRGGPGGPRDGPRGGPRGGPRGGR. Residues 167-195 show a composition bias toward gly residues; sequence GSHGGLRGGPGGPRDGPRGGPRGGPRGGR.

The protein belongs to the SXP/RAL-2 family.

This chain is SXP/RAL-2-like protein 2, found in Caenorhabditis elegans.